The primary structure comprises 211 residues: ATP phosphoribosyltransferase (211 aa).

This sequence belongs to the ATP phosphoribosyltransferase family. Short subfamily. As to quaternary structure, heteromultimer composed of HisG and HisZ subunits.

It is found in the cytoplasm. It catalyses the reaction 1-(5-phospho-beta-D-ribosyl)-ATP + diphosphate = 5-phospho-alpha-D-ribose 1-diphosphate + ATP. It functions in the pathway amino-acid biosynthesis; L-histidine biosynthesis; L-histidine from 5-phospho-alpha-D-ribose 1-diphosphate: step 1/9. Its function is as follows. Catalyzes the condensation of ATP and 5-phosphoribose 1-diphosphate to form N'-(5'-phosphoribosyl)-ATP (PR-ATP). Has a crucial role in the pathway because the rate of histidine biosynthesis seems to be controlled primarily by regulation of HisG enzymatic activity. The chain is ATP phosphoribosyltransferase from Pseudomonas putida (strain ATCC 700007 / DSM 6899 / JCM 31910 / BCRC 17059 / LMG 24140 / F1).